Consider the following 690-residue polypeptide: Glycine--tRNA ligase beta subunit (690 aa).

This sequence belongs to the class-II aminoacyl-tRNA synthetase family. In terms of assembly, tetramer of two alpha and two beta subunits.

The protein localises to the cytoplasm. It carries out the reaction tRNA(Gly) + glycine + ATP = glycyl-tRNA(Gly) + AMP + diphosphate. This is Glycine--tRNA ligase beta subunit from Proteus mirabilis (strain HI4320).